Here is a 210-residue protein sequence, read N- to C-terminus: Glutathione S-transferase P (210 aa).

The GST N-terminal domain occupies 2 to 81; it reads PPYTIVYFPV…HLGRTLGLYG (80 aa). Y4 bears the Phosphotyrosine; by EGFR mark. Residues Y8, R14, W39, K45, and 52–53 each bind glutathione; that span reads QL. T62 bears the Phosphothreonine mark. 65-66 is a glutathione binding site; that stretch reads QS. Residues 83–204 enclose the GST C-terminal domain; that stretch reads DQQEAALVDM…ASPEHMNRPI (122 aa). N6-succinyllysine occurs at positions 103 and 116. K128 carries the N6-acetyllysine modification.

This sequence belongs to the GST superfamily. Pi family. In terms of assembly, homodimer. Interacts with CDK5.

Its subcellular location is the cytoplasm. The protein localises to the mitochondrion. It localises to the nucleus. It carries out the reaction RX + glutathione = an S-substituted glutathione + a halide anion + H(+). The enzyme catalyses prostaglandin J2 + glutathione = prostaglandin J2-S-(R)-glutathione. It catalyses the reaction prostaglandin J2 + glutathione = prostaglandin J2-S-(S)-glutathione. The catalysed reaction is prostaglandin A2 + glutathione = prostaglandin A2-S-(S)-glutathione. It carries out the reaction 11(S)-hydroxy-14(S),15(S)-epoxy-(5Z,8Z,12E)-eicosatrienoate + glutathione = (11S,15S)-dihydroxy-14(R)-S-glutathionyl-(5Z,8Z,12E)-eicosatrienoate. Its function is as follows. Conjugation of reduced glutathione to a wide number of exogenous and endogenous hydrophobic electrophiles. Involved in the formation of glutathione conjugates of both prostaglandin A2 (PGA2) and prostaglandin J2 (PGJ2). Participates in the formation of novel hepoxilin regioisomers. Negatively regulates CDK5 activity via p25/p35 translocation to prevent neurodegeneration. The protein is Glutathione S-transferase P (GSTP1) of Bos taurus (Bovine).